A 208-amino-acid chain; its full sequence is MQSFKICFFISCLSVVLVKGQFGGTVSSNPNGGLDVNARLSKTIGDPNANVVGGVFAAGNTDGGPATRGAFLAANKDGHGLSLQHSKTDNFGSSLTSSAHAHLFNDKTHKLDANAFHSRTHLDNGFKFDRVGGGLRYDHVTGHGASLTASRIPQLDMNTLGLTGKANLWSSPNRATTLDLTGGVSKHFGGPFDGQTNKQIGLGLNSRF.

The signal sequence occupies residues 1–20; the sequence is MQSFKICFFISCLSVVLVKG. The propeptide occupies 21-47; it reads QFGGTVSSNPNGGLDVNARLSKTIGDP.

As to expression, hemolymph and fat body.

It is found in the secreted. Its function is as follows. Hemolymph antibacterial protein against Gram-negative bacteria. This Glossina morsitans morsitans (Savannah tsetse fly) protein is Attacin-A.